Here is a 625-residue protein sequence, read N- to C-terminus: Probable inactive receptor kinase At5g16590 (625 aa).

The first 23 residues, 1–23 (MKNKTNLGLSVFFFFICLVSVTS), serve as a signal peptide directing secretion. LRR repeat units lie at residues 88–111 (KLET…ANLT), 112–134 (LLRY…LFTL), 136–158 (NIIR…VNSA), 160–182 (RLAT…KIKL), and 183–204 (QQFN…SGMP). A helical transmembrane segment spans residues 246–266 (AIVGIVIGCFVLLLVLFLIVF). Residues 343 to 613 (KASAEVLGKG…PEVTRLIEEV (271 aa)) form the Protein kinase domain. Position 345 is a phosphoserine (S345). ATP-binding positions include 349 to 357 (LGKGTFGSS) and K371. Residue S422 is modified to Phosphoserine. A phosphothreonine mark is found at T442 and T496. Position 517 is a phosphoserine (S517). A Phosphothreonine modification is found at T593. Residues S619 and S624 each carry the phosphoserine modification.

It belongs to the protein kinase superfamily. Ser/Thr protein kinase family.

Its subcellular location is the cell membrane. In terms of biological role, might be involved in early recognition of growth promoting fungi. Appears to be specific for P.indica. This chain is Probable inactive receptor kinase At5g16590, found in Arabidopsis thaliana (Mouse-ear cress).